The chain runs to 290 residues: Pyridoxal kinase PdxY (290 aa).

Substrate is bound by residues serine 12 and 47–48 (TQ). ATP is bound by residues aspartate 114, glutamate 151, lysine 184, and 211–214 (RPLL). Residue aspartate 225 participates in substrate binding.

Belongs to the pyridoxine kinase family. PdxY subfamily. In terms of assembly, homodimer. Mg(2+) serves as cofactor.

The catalysed reaction is pyridoxal + ATP = pyridoxal 5'-phosphate + ADP + H(+). It participates in cofactor metabolism; pyridoxal 5'-phosphate salvage; pyridoxal 5'-phosphate from pyridoxal: step 1/1. Functionally, pyridoxal kinase involved in the salvage pathway of pyridoxal 5'-phosphate (PLP). Catalyzes the phosphorylation of pyridoxal to PLP. The chain is Pyridoxal kinase PdxY from Pseudomonas putida (strain GB-1).